A 262-amino-acid polypeptide reads, in one-letter code: Indole-3-glycerol phosphate synthase (262 aa).

This sequence belongs to the TrpC family.

The enzyme catalyses 1-(2-carboxyphenylamino)-1-deoxy-D-ribulose 5-phosphate + H(+) = (1S,2R)-1-C-(indol-3-yl)glycerol 3-phosphate + CO2 + H2O. Its pathway is amino-acid biosynthesis; L-tryptophan biosynthesis; L-tryptophan from chorismate: step 4/5. In Bordetella petrii (strain ATCC BAA-461 / DSM 12804 / CCUG 43448), this protein is Indole-3-glycerol phosphate synthase.